The sequence spans 241 residues: Ribonuclease PH (241 aa).

Phosphate-binding positions include Arg-89 and 127–129 (GTR).

This sequence belongs to the RNase PH family. As to quaternary structure, homohexameric ring arranged as a trimer of dimers.

The catalysed reaction is tRNA(n+1) + phosphate = tRNA(n) + a ribonucleoside 5'-diphosphate. Its function is as follows. Phosphorolytic 3'-5' exoribonuclease that plays an important role in tRNA 3'-end maturation. Removes nucleotide residues following the 3'-CCA terminus of tRNAs; can also add nucleotides to the ends of RNA molecules by using nucleoside diphosphates as substrates, but this may not be physiologically important. Probably plays a role in initiation of 16S rRNA degradation (leading to ribosome degradation) during starvation. The sequence is that of Ribonuclease PH from Xanthomonas campestris pv. campestris (strain 8004).